A 74-amino-acid polypeptide reads, in one-letter code: Consomatin Gh1 (74 aa).

Residues 1 to 22 form the signal peptide; sequence MQTACWVMVMMMVWITAPLSEG. A propeptide spanning residues 23–57 is cleaved from the precursor; it reads GKLNDVIRGLVPDDVTPQLILRSLFFHRPSDSVVR. Residues Cys65 and Cys70 are joined by a disulfide bond. D-tryptophan is present on Trp67. 4-hydroxyproline is present on residues Pro71, Pro72, and Pro74.

It belongs to the conotoxin C superfamily. Consomatin family. Expressed by the venom duct.

It localises to the secreted. Its function is as follows. Moderately activates human somatostatin receptors (SSTR) with a preferential activation of SSTR1 and SSTR4. In vivo, does not cause behavioral changes in mice within a few minutes of intracranial injection, but causes a progressive loss of movement thereafter. Four to five hours after injection, mice recover, even with the highest dose tested. Shows antinociception and antihyperalgesia activities in two mouse models of acute pain, most probably by acting outside the central nervous system. The chain is Consomatin Gh1 from Conus grahami (Cone snail).